A 181-amino-acid chain; its full sequence is FMN reductase (NADH) RutF (181 aa).

The protein belongs to the non-flavoprotein flavin reductase family. RutF subfamily.

The catalysed reaction is FMNH2 + NAD(+) = FMN + NADH + 2 H(+). Catalyzes the reduction of FMN to FMNH2 which is used to reduce pyrimidine by RutA via the Rut pathway. The polypeptide is FMN reductase (NADH) RutF (Ancylobacter novellus (strain ATCC 8093 / DSM 506 / JCM 20403 / CCM 1077 / IAM 12100 / NBRC 12443 / NCIMB 10456) (Starkeya novella)).